The sequence spans 335 residues: Beta-hexosaminidase (335 aa).

Substrate-binding positions include Asp-60, Arg-68, Arg-133, and Lys-163–His-164. Residue His-176 is the Proton donor/acceptor of the active site. The active-site Nucleophile is the Asp-247.

Belongs to the glycosyl hydrolase 3 family. NagZ subfamily.

The protein localises to the cytoplasm. The catalysed reaction is Hydrolysis of terminal non-reducing N-acetyl-D-hexosamine residues in N-acetyl-beta-D-hexosaminides.. It participates in cell wall biogenesis; peptidoglycan recycling. Plays a role in peptidoglycan recycling by cleaving the terminal beta-1,4-linked N-acetylglucosamine (GlcNAc) from peptide-linked peptidoglycan fragments, giving rise to free GlcNAc, anhydro-N-acetylmuramic acid and anhydro-N-acetylmuramic acid-linked peptides. The polypeptide is Beta-hexosaminidase (Stenotrophomonas maltophilia (strain K279a)).